Here is a 324-residue protein sequence, read N- to C-terminus: MAAVPRGLLSRINQFLSIRSITPSSSESLPHCSSFFLIRRFSSDTGLMDGGGSDIIGAQTRIIEAKQGEMSSRSKRTGIIAVKCGMTALWDKWGKRIPISILWVDDNIVSQVKTVEKEGIFALQIGCGQKKPKHLSKAVVGHFRAQGVPLKRKLREFPVTEDALLPVGTSLGVRHFVPGQYVDVTGITRGKGFQGCMKRHGFSGMPASHGASLSHRSGGSTGQRDAPGKVFKGRKMAGRMGADQRTVKNVWVYKIDPARNLMWVRGQVPGAEGNFVFIKDAWCKKPDISKLPFPTYLAPEDEDPSELEPLVADLGEVDPFMLAE.

The transit peptide at 1–41 (MAAVPRGLLSRINQFLSIRSITPSSSESLPHCSSFFLIRRF) directs the protein to the mitochondrion. Positions 206–229 (PASHGASLSHRSGGSTGQRDAPGK) are disordered.

The protein belongs to the universal ribosomal protein uL3 family. Part of the 50S ribosomal subunit.

It localises to the mitochondrion. Functionally, one of the primary rRNA binding proteins, it binds directly near the 3'-end of the 23S rRNA, where it nucleates assembly of the 50S subunit. In Arabidopsis thaliana (Mouse-ear cress), this protein is Large ribosomal subunit protein uL3m.